A 446-amino-acid chain; its full sequence is MSSSVWQERRHGEDKQRRNDHRSPFQRDRARILHSAAFRRLQAKTQVLGVGMNDFYRTRLTHSLEVSQIGTGIAAQLSRKYPEHKPLLGSMSLLESLCLAHDIGHPPFGHGGEVALNYMMRHHGGFEGNGQTFRILSKLEPYTEAFGMNLCRRTMLGILKYPAPQSLLFVAGSHPEITNHRQLKPSQWPPVKGIFDDDSDIFDWVLEPLSVADRARFTSVQPSLQPNYPHLRTQFKSFDCSIMELADDIAYAVHDLEDAIVMGIVTASQWQQDVAPTLKHSGDPWIRQELADIGTKLFSHEHHLRKDAIGTLVNGFVTAIIINDDPAFEEPLLRFNASLEPEFANALNVLKQLVFKYVIRKPEIQMLEYKGQQIVMGLFEAFASDPERLLPLNTQERWRTSEQQGQNSHRVLADYISGMTDEFAGRLYQQLFSPKAGSNVELSKEM.

Residues 1–28 (MSSSVWQERRHGEDKQRRNDHRSPFQRD) form a disordered region. Over residues 7–28 (QERRHGEDKQRRNDHRSPFQRD) the composition is skewed to basic and acidic residues. Residues 59-252 (RLTHSLEVSQ…MELADDIAYA (194 aa)) enclose the HD domain.

This sequence belongs to the dGTPase family. Type 2 subfamily.

In Shewanella sp. (strain MR-7), this protein is Deoxyguanosinetriphosphate triphosphohydrolase-like protein.